The following is a 96-amino-acid chain: Small ribosomal subunit protein bS6 (96 aa).

Belongs to the bacterial ribosomal protein bS6 family.

Binds together with bS18 to 16S ribosomal RNA. The polypeptide is Small ribosomal subunit protein bS6 (Beutenbergia cavernae (strain ATCC BAA-8 / DSM 12333 / CCUG 43141 / JCM 11478 / NBRC 16432 / NCIMB 13614 / HKI 0122)).